Reading from the N-terminus, the 541-residue chain is Cytochrome P450 monooxygenase claW (541 aa).

Residues 12–32 (VINALVILFSFWAFLSLIRVI) traverse the membrane as a helical segment. Position 480 (C480) interacts with heme.

It belongs to the cytochrome P450 family. Requires heme as cofactor.

It is found in the membrane. The protein operates within secondary metabolite biosynthesis; terpenoid biosynthesis. Functionally, cytochrome P450 monooxygenase; part of the gene cluster that mediates the biosynthesis of clavilactone A, a meroterpenoid that features a unique benzo-fused ten-membered carbocyclic ring unit with an alpha,beta-epoxy-gamma-lactone moiety, forming an intriguing 10/5/3 tricyclic nested skeleton. Cytochrome P450 monooxygenases claO, claP, claQ, claU, and claW are close orthologs, suggesting that a redundant function or pseudogenes are present in the cla cluster. These monoxygenases are not involved in clavilactone A biosynthesis nor its modification. ClaR, ClaS and ClaT are sufficient to produce clavilactone A. The biosynthesis begins with the prenyltransferase claS that transfers geranyl pyrophosphate (GPP) to hydroquinone to produces geranylhydroquinone. The cytochrome P450 monooxygenase claR then catalyzes the diradical coupling reaction between the intramolecular hydroquinone and allyl moieties to form the benzo-fused ten-membered carbocyclic ring unit of wigantol. Finally the cytochrome P450 monooxygenase claT exquisitely and stereoselectively assembles the alpha,beta-epoxy-gamma-lactone moiety, producing clavilactone A via arnebinol A. The sequence is that of Cytochrome P450 monooxygenase claW from Ampulloclitocybe clavipes (Club foot).